The primary structure comprises 133 residues: Probable 4-amino-4-deoxy-L-arabinose-phosphoundecaprenol flippase subunit ArnF (133 aa).

Residues Met-1 to Tyr-5 are Cytoplasmic-facing. A helical transmembrane segment spans residues Leu-6–Met-26. Topologically, residues Ser-27 to Asn-47 are periplasmic. The helical transmembrane segment at Ile-48 to Trp-68 threads the bilayer. The EamA domain occupies Ile-51 to Gln-125. Residues Leu-69–Ala-80 are Cytoplasmic-facing. The helical transmembrane segment at Tyr-81–Phe-101 threads the bilayer. At Gln-102 to Glu-103 the chain is on the periplasmic side. The helical transmembrane segment at Thr-104–Ser-124 threads the bilayer. Topologically, residues Gln-125 to His-133 are cytoplasmic.

This sequence belongs to the ArnF family. As to quaternary structure, heterodimer of ArnE and ArnF.

It is found in the cell inner membrane. It functions in the pathway bacterial outer membrane biogenesis; lipopolysaccharide biosynthesis. Functionally, translocates 4-amino-4-deoxy-L-arabinose-phosphoundecaprenol (alpha-L-Ara4N-phosphoundecaprenol) from the cytoplasmic to the periplasmic side of the inner membrane. The polypeptide is Probable 4-amino-4-deoxy-L-arabinose-phosphoundecaprenol flippase subunit ArnF (Proteus mirabilis (strain HI4320)).